Consider the following 757-residue polypeptide: Exo-alpha-(1-&gt;6)-L-arabinopyranosidase (757 aa).

Aspartate 232 is an active-site residue.

The protein belongs to the glycosyl hydrolase 3 family. Homotetramer.

With respect to regulation, completely inhibited by Cu(2+) and activated by Co(2+). Catalyzes the hydrolysis of a non-reducing terminal alpha-L-arabinopyranosidic linkage in ginsenoside Rb2 (alpha-L-arabinopyranosyl-(1-&gt;6)-alpha-D-glucopyranosyl) to release alpha-D-glucopyranosyl (Rd). It is not able to hydrolyze alpha-L-arabinofuranosyl-(1-&gt;6)-alpha-D-glucopyranosyl (Rc). This is Exo-alpha-(1-&gt;6)-L-arabinopyranosidase (apy) from Bifidobacterium longum.